The chain runs to 549 residues: Undecaprenyl phosphate-alpha-4-amino-4-deoxy-L-arabinose arabinosyl transferase (549 aa).

12 helical membrane passes run Leu-9 to Ile-29, Leu-80 to Leu-100, Ser-112 to Ala-132, Pro-136 to Gly-156, Phe-176 to Leu-196, Leu-204 to Leu-224, Pro-256 to Pro-276, Gln-288 to Ser-308, Leu-312 to Val-332, Asn-346 to Leu-366, Phe-376 to Trp-396, and Ala-402 to Pro-422.

It belongs to the glycosyltransferase 83 family.

It localises to the cell inner membrane. The catalysed reaction is 4-amino-4-deoxy-alpha-L-arabinopyranosyl di-trans,octa-cis-undecaprenyl phosphate + lipid IVA = lipid IIA + di-trans,octa-cis-undecaprenyl phosphate.. It participates in lipopolysaccharide metabolism; 4-amino-4-deoxy-beta-L-arabinose-lipid A biosynthesis. Functionally, catalyzes the transfer of the L-Ara4N moiety of the glycolipid undecaprenyl phosphate-alpha-L-Ara4N to lipid A. The modified arabinose is attached to lipid A and is required for resistance to polymyxin and cationic antimicrobial peptides. The sequence is that of Undecaprenyl phosphate-alpha-4-amino-4-deoxy-L-arabinose arabinosyl transferase from Pseudomonas aeruginosa (strain ATCC 15692 / DSM 22644 / CIP 104116 / JCM 14847 / LMG 12228 / 1C / PRS 101 / PAO1).